A 152-amino-acid chain; its full sequence is Large ribosomal subunit protein eL32 (152 aa).

It belongs to the eukaryotic ribosomal protein eL32 family.

This Pyrobaculum aerophilum (strain ATCC 51768 / DSM 7523 / JCM 9630 / CIP 104966 / NBRC 100827 / IM2) protein is Large ribosomal subunit protein eL32 (rpl32e).